The primary structure comprises 970 residues: Transposase for insertion sequence element IS1071 in transposon Tn5271 (970 aa).

The protein belongs to the transposase 7 family.

Required for transposition of transposon Tn5271. The protein is Transposase for insertion sequence element IS1071 in transposon Tn5271 of Comamonas testosteroni (Pseudomonas testosteroni).